The chain runs to 445 residues: Gasdermin-A (445 aa).

The tract at residues 1–251 is triggers pyroptosis; the sequence is MTMFENVTRA…VILIQASDVG (251 aa). 9 to 13 contacts a cardiolipin; it reads RALAR. The next 4 membrane-spanning stretches (beta stranded) occupy residues 78–95, 99–120, 163–179, and 183–197; these read NFGFKNMLDTRVEGDVDV, VKVKGTAGLSQNSTLEVQTLSV, VTLERAGKAEACFSLPF, and LGLQGSINHKEAVTI.

This sequence belongs to the gasdermin family. Homooligomer; homooligomeric ring-shaped pore complex containing 18-36 subunits when inserted in the membrane. In terms of processing, cleavage by S.pyogenes SpeB relieves autoinhibition by releasing the N-terminal moiety (Gasdermin-A, N-terminal) that initiates pyroptosis. Palmitoylated. As to expression, expressed predominantly in the gastrointestinal tract and, at a lower level, in the skin. Also detected in mammary gland. In the gastrointestinal tract, mainly expressed in differentiated cells, including the differentiated cell layer of esophagus and mucus-secreting pit cells of the gastric epithelium. Down-regulated in gastric cancer cells.

It is found in the cytoplasm. Its subcellular location is the perinuclear region. The protein localises to the cytosol. It localises to the cell membrane. With respect to regulation, the full-length protein before cleavage is inactive: intramolecular interactions between N- and C-terminal domains mediate autoinhibition in the absence of activation signal. The intrinsic pyroptosis-inducing activity is carried by the released N-terminal moiety (Gasdermin-A, N-terminal) following cleavage by S.pyogenes effector protein SpeB. This form constitutes the precursor of the pore-forming protein and acts as a sensor of infection: upon infection by S.pyogenes, specifically cleaved by S.pyogenes effector protein SpeB in epithelial cells, releasing the N-terminal moiety (Gasdermin-A, N-terminal) that binds to membranes and forms pores, triggering pyroptosis. In terms of biological role, pore-forming protein that causes membrane permeabilization and pyroptosis. Released upon cleavage by S.pyogenes effector protein SpeB, and binds to membrane inner leaflet lipids. Homooligomerizes within the membrane and forms pores of 10-15 nanometers (nm) of inner diameter, triggering pyroptosis. Pyroptosis triggers the elimination of the infected skin cell, depriving the pathogen of its protective niche, while inducing an inflammatory response. This ultimately prevents bacterial penetration of the epithelial barrier and a subsequent systemic dissemination of the pathogen. Binds to cardiolipin and other acidic phospholipids, such as phosphatidylserine, which mediate its targeting to the inner leaflet membrane. This Homo sapiens (Human) protein is Gasdermin-A.